A 742-amino-acid chain; its full sequence is Serine/threonine-protein kinase SKY1 (742 aa).

Residues 13–146 (KSAHLADTST…KDYRPGGYHP (134 aa)) are disordered. Residues 19–35 (DTSTDASISCEEATSSQ) show a composition bias toward polar residues. A compositionally biased stretch (low complexity) spans 56-73 (TKSKLSLALQTSKSSSSA). Over residues 81–101 (TSSKTEDFSTKSIKKKPDSGV) the composition is skewed to basic and acidic residues. Residues 106 to 127 (SIQSDSGPQSDSDLDSDSSISS) show a composition bias toward low complexity. Over residues 128–140 (CDERNEESLKDYR) the composition is skewed to basic and acidic residues. Residues 158–706 (YILVRKLGWG…AGGLVNHPWL (549 aa)) enclose the Protein kinase domain. ATP-binding positions include 164–172 (LGWGHFSTV) and K187. D294 serves as the catalytic Proton acceptor. Phosphothreonine occurs at positions 383 and 386. Phosphoserine is present on residues S388, S393, S410, S427, S432, S445, S449, and S453. Residues 459–491 (INEDSNDNNNNDNSKNKNNNNNNSNNNNNEDIM) form a disordered region. Positions 465 to 489 (DNNNNDNSKNKNNNNNNSNNNNNED) are enriched in low complexity.

It belongs to the protein kinase superfamily. Ser/Thr protein kinase family.

It catalyses the reaction L-seryl-[protein] + ATP = O-phospho-L-seryl-[protein] + ADP + H(+). The catalysed reaction is L-threonyl-[protein] + ATP = O-phospho-L-threonyl-[protein] + ADP + H(+). Functionally, constitutively active kinase, specifically and sequentially phosphorylates serine/arginine (SR)-type shuttling mRNA binding proteins in their RS dipeptide repeats. This is Serine/threonine-protein kinase SKY1 (SKY1) from Saccharomyces cerevisiae (strain ATCC 204508 / S288c) (Baker's yeast).